The sequence spans 404 residues: Cysteine desulfurase IscS (404 aa).

Pyridoxal 5'-phosphate is bound by residues Ala-75–Thr-76, Asn-155, Gln-183, and Ser-203–His-205. Lys-206 carries the post-translational modification N6-(pyridoxal phosphate)lysine. Residue Thr-243 coordinates pyridoxal 5'-phosphate. Cys-328 acts as the Cysteine persulfide intermediate in catalysis. Cys-328 serves as a coordination point for [2Fe-2S] cluster.

It belongs to the class-V pyridoxal-phosphate-dependent aminotransferase family. NifS/IscS subfamily. Homodimer. Forms a heterotetramer with IscU, interacts with other sulfur acceptors. It depends on pyridoxal 5'-phosphate as a cofactor.

The protein localises to the cytoplasm. The enzyme catalyses (sulfur carrier)-H + L-cysteine = (sulfur carrier)-SH + L-alanine. The protein operates within cofactor biosynthesis; iron-sulfur cluster biosynthesis. In terms of biological role, master enzyme that delivers sulfur to a number of partners involved in Fe-S cluster assembly, tRNA modification or cofactor biosynthesis. Catalyzes the removal of elemental sulfur atoms from cysteine to produce alanine. Functions as a sulfur delivery protein for Fe-S cluster synthesis onto IscU, an Fe-S scaffold assembly protein, as well as other S acceptor proteins. This chain is Cysteine desulfurase IscS, found in Neisseria meningitidis serogroup C / serotype 2a (strain ATCC 700532 / DSM 15464 / FAM18).